A 237-amino-acid chain; its full sequence is MTINALLLSSSRVGDTPYLAHAIPFIKPLTTNAQKWIFIPYAGVSMSYDTYLASVVTGLSELELDISGIHQHPDPQQAIKDADGILIGGGNTFHLLHQLYRYDLVTLIGEQVALGKPYIGWSAGSNVSGLSIRTTNDMPIIEPPSFNALNLVPFQLNPHYSNYQAPGHNGETRAQRLLEFTKVDPLTPVVGIVEGSALWRQGDKLSLLGDQPAYLFCGEQQEIPIPVGSDLSHLLKA.

Residues S122, D137, and H159 each act as charge relay system in the active site.

It belongs to the peptidase S51 family.

It localises to the cytoplasm. It catalyses the reaction Dipeptidase E catalyzes the hydrolysis of dipeptides Asp-|-Xaa. It does not act on peptides with N-terminal Glu, Asn or Gln, nor does it cleave isoaspartyl peptides.. In terms of biological role, hydrolyzes dipeptides containing N-terminal aspartate residues. May play a role in allowing the cell to use peptide aspartate to spare carbon otherwise required for the synthesis of the aspartate family of amino acids. The polypeptide is Peptidase E (Shewanella baltica (strain OS155 / ATCC BAA-1091)).